A 373-amino-acid chain; its full sequence is Muscleblind-like protein 2 (373 aa).

4 C3H1-type zinc fingers span residues 13 to 41 (WLTL…HPPK), 47 to 73 (NGRV…HPPT), 176 to 204 (TDKL…HPAD), and 212 to 238 (DNTV…HPPA).

This sequence belongs to the muscleblind family. As to quaternary structure, interacts with ITGA3. Expressed in heart, brain, placenta, lung, liver, skeletal muscle, kidney and pancreas.

Its subcellular location is the nucleus. It is found in the cytoplasm. Mediates pre-mRNA alternative splicing regulation. Acts either as activator or repressor of splicing on specific pre-mRNA targets. Inhibits cardiac troponin-T (TNNT2) pre-mRNA exon inclusion but induces insulin receptor (IR) pre-mRNA exon inclusion in muscle. Antagonizes the alternative splicing activity pattern of CELF proteins. RNA-binding protein that binds to 5'ACACCC-3' core sequence, termed zipcode, within the 3'UTR of ITGA3. Binds to CUG triplet repeat expansion in myotonic dystrophy muscle cells by sequestering the target RNAs. Together with RNA binding proteins RBPMS and RBFOX2, activates vascular smooth muscle cells alternative splicing events. Regulates NCOR2 alternative splicing. Seems to regulate expression and localization of ITGA3 by transporting it from the nucleus to cytoplasm at adhesion plaques. May play a role in myotonic dystrophy pathophysiology (DM). This is Muscleblind-like protein 2 (MBNL2) from Homo sapiens (Human).